The sequence spans 485 residues: Ribulose bisphosphate carboxylase large chain (485 aa).

N124 and T174 together coordinate substrate. The active-site Proton acceptor is the K176. Position 178 (K178) interacts with substrate. The Mg(2+) site is built by K202, D204, and E205. N6-carboxylysine is present on K202. H294 serves as the catalytic Proton acceptor. Residues R295, H327, and S379 each contribute to the substrate site.

Belongs to the RuBisCO large chain family. Type I subfamily. As to quaternary structure, heterohexadecamer of 8 large chains and 8 small chains. The cofactor is Mg(2+).

It catalyses the reaction 2 (2R)-3-phosphoglycerate + 2 H(+) = D-ribulose 1,5-bisphosphate + CO2 + H2O. The catalysed reaction is D-ribulose 1,5-bisphosphate + O2 = 2-phosphoglycolate + (2R)-3-phosphoglycerate + 2 H(+). Its function is as follows. RuBisCO catalyzes two reactions: the carboxylation of D-ribulose 1,5-bisphosphate, the primary event in carbon dioxide fixation, as well as the oxidative fragmentation of the pentose substrate. Both reactions occur simultaneously and in competition at the same active site. The polypeptide is Ribulose bisphosphate carboxylase large chain (Rhodopseudomonas palustris (strain ATCC BAA-98 / CGA009)).